We begin with the raw amino-acid sequence, 667 residues long: Sorting nexin mvp1 (667 aa).

The segment at 221 to 268 is disordered; sequence AGNLHSQQPPKFSVDSSVDDNAITPRKPFSKIPNRLSPSTQPLLSNSR. Over residues 224–236 the composition is skewed to polar residues; the sequence is LHSQQPPKFSVDS. Residues 279 to 398 form the PX domain; sequence TSFPASLEMN…RVFFTEPNVF (120 aa). A 1,2-diacyl-sn-glycero-3-phospho-(1D-myo-inositol-3-phosphate) is bound by residues arginine 320, serine 322, and lysine 346. Residues 574–594 are disordered; sequence ANSDESGRNRTFLNRSSKKRA.

Belongs to the sorting nexin family. As to quaternary structure, homodimer. Forms an autoinhibited tetramer consisting of 2 homodimers that self-interact, wherein the membrane-interacting BAR surfaces are sequestered and the PX lipid-binding sites are occluded. Interacts with Vps1.

Its subcellular location is the cytoplasm. It localises to the endosome membrane. Functionally, required for vacuolar protein sorting. Component of the retromer-mediated endosome-to-Golgi retrograde pathway. Required for efficient cargo export from the endosome, promoting Vps1-mediated fission of retromer-coated tubules that bud from the endosome. The protein is Sorting nexin mvp1 (mvp1) of Schizosaccharomyces pombe (strain 972 / ATCC 24843) (Fission yeast).